The primary structure comprises 1372 residues: DNA-directed RNA polymerase subunit beta' (1372 aa).

4 residues coordinate Zn(2+): cysteine 69, cysteine 71, cysteine 84, and cysteine 87. Mg(2+)-binding residues include aspartate 460, aspartate 462, and aspartate 464. The Zn(2+) site is built by cysteine 808, cysteine 882, cysteine 889, and cysteine 892.

This sequence belongs to the RNA polymerase beta' chain family. The RNAP catalytic core consists of 2 alpha, 1 beta, 1 beta' and 1 omega subunit. When a sigma factor is associated with the core the holoenzyme is formed, which can initiate transcription. Requires Mg(2+) as cofactor. The cofactor is Zn(2+).

It catalyses the reaction RNA(n) + a ribonucleoside 5'-triphosphate = RNA(n+1) + diphosphate. Functionally, DNA-dependent RNA polymerase catalyzes the transcription of DNA into RNA using the four ribonucleoside triphosphates as substrates. This is DNA-directed RNA polymerase subunit beta' from Rickettsia felis (strain ATCC VR-1525 / URRWXCal2) (Rickettsia azadi).